The chain runs to 80 residues: U4-theraphotoxin-Spl1a (80 aa).

Positions 1 to 21 are cleaved as a signal peptide; that stretch reads MKASLFAVIFGLVVLCACSFA. Residues 22–50 constitute a propeptide that is removed on maturation; it reads EDQFASPNELLKSMFVESTHELTPEVEGR. Intrachain disulfides connect Cys52-Cys66, Cys59-Cys71, and Cys65-Cys75. Leu79 is subject to Leucine amide.

It belongs to the neurotoxin 30 (phrixotoxin) family. As to expression, expressed by the venom gland.

It is found in the secreted. Its function is as follows. Probable ion channel inhibitor. Shows insecticidal activity when injected into mealworms. The protein is U4-theraphotoxin-Spl1a of Selenotypus plumipes (Australian featherleg tarantula).